The primary structure comprises 208 residues: Troponin I, cardiac muscle (208 aa).

Disordered regions lie at residues 1-37 (MAEEEEPKPPPLRRKSSANYRGYAVEPHAKRQSKISA), 54-74 (DLEREEQERAGEKQRHLGELC), and 168-208 (VRKD…GGQS). Residue A2 is modified to N-acetylalanine. An involved in binding TNC region spans residues 28 to 73 (HAKRQSKISASRKLQLKTLLLQRAKRDLEREEQERAGEKQRHLGEL). Composition is skewed to basic and acidic residues over residues 54-71 (DLEREEQERAGEKQRHLG) and 168-187 (VRKDEAEKESREVGDWRKNV).

The protein belongs to the troponin I family. In terms of assembly, binds to actin and tropomyosin.

Functionally, troponin I is the inhibitory subunit of troponin, the thin filament regulatory complex which confers calcium-sensitivity to striated muscle actomyosin ATPase activity. The protein is Troponin I, cardiac muscle (TNNI3) of Coturnix japonica (Japanese quail).